The chain runs to 780 residues: Alpha-xylosidase (780 aa).

N-linked (GlcNAc...) asparagine glycans are attached at residues N48, N84, N247, and N298. Residues D434 and E437 contribute to the active site. An N-linked (GlcNAc...) asparagine glycan is attached at N443. D501 serves as the catalytic Proton donor. N-linked (GlcNAc...) asparagine glycosylation occurs at N718.

This sequence belongs to the glycosyl hydrolase 31 family.

Its subcellular location is the secreted. It catalyses the reaction Hydrolysis of terminal, non-reducing alpha-D-xylose residues with release of alpha-D-xylose.. In terms of biological role, catalyzes the liberation of alpha-xylose from the non-reducing terminal glucose of xyloglucan oligosaccharides. The chain is Alpha-xylosidase from Emericella nidulans (strain FGSC A4 / ATCC 38163 / CBS 112.46 / NRRL 194 / M139) (Aspergillus nidulans).